A 533-amino-acid polypeptide reads, in one-letter code: Glucose-6-phosphate exchanger SLC37A1 (533 aa).

Residues 18–38 form a helical membrane-spanning segment; that stretch reads QWYRAFIFILTFLLYASFHLS. N81 is a glycosylation site (N-linked (GlcNAc...) asparagine). Helical transmembrane passes span 100–120, 129–149, 157–177, and 222–242; these read GALDYSFLCAYAVGMYLSGII, YLTFGMLASGAFTALFGLGYF, FYVVTQVINGLVQTTGWPSVV, and SFVVPGAIVAAMGIVCFLFLI. N263 carries an N-linked (GlcNAc...) asparagine glycan. 7 consecutive transmembrane segments (helical) span residues 304–324, 334–354, 366–386, 394–414, 423–443, 466–486, and 490–510; these read VVILPGDGGSGTAAISFTGAL, LCLLFAKLVSYTFLFWLPLYI, GELSTLFDVGGIFGGILAGVI, ASTCGLMLLLAAPTLYIFSTV, IAMLLLSGALVSGPYTLITTA, AIIDGTGSVGAALGPLLAGLL, and GWSNVFYMLMFADACALLFLI.

Belongs to the major facilitator superfamily. Organophosphate:Pi antiporter (OPA) (TC 2.A.1.4) family. As to expression, expressed in numerous tissues, with highest expression in pancreas, kidney, bone marrow, spleen, liver, small intestine, as well as in fetal brain, liver and spleen.

Its subcellular location is the endoplasmic reticulum membrane. The catalysed reaction is D-glucose 6-phosphate(in) + phosphate(out) = D-glucose 6-phosphate(out) + phosphate(in). With respect to regulation, inhibited by vanadate but not by chlorogenic acid. Functionally, inorganic phosphate and glucose-6-phosphate antiporter. May transport cytoplasmic glucose-6-phosphate into the lumen of the endoplasmic reticulum and translocate inorganic phosphate into the opposite direction. Independent of a lumenal glucose-6-phosphatase. May not play a role in homeostatic regulation of blood glucose levels. The chain is Glucose-6-phosphate exchanger SLC37A1 from Homo sapiens (Human).